We begin with the raw amino-acid sequence, 124 residues long: Probable S-adenosyl-L-methionine-binding protein VNG_1115H (124 aa).

The region spanning 3–124 (ATPIGYADTR…PVLDLKPALD (122 aa)) is the TsaA-like domain. S-adenosyl-L-methionine-binding positions include 20–22 (PRQ), 58–59 (DD), Arg-78, and 111–114 (AHGS).

This sequence belongs to the tRNA methyltransferase O family.

This is Probable S-adenosyl-L-methionine-binding protein VNG_1115H from Halobacterium salinarum (strain ATCC 700922 / JCM 11081 / NRC-1) (Halobacterium halobium).